We begin with the raw amino-acid sequence, 200 residues long: Transcription factor FapR (200 aa).

It belongs to the FapR family.

Functionally, transcriptional factor involved in regulation of membrane lipid biosynthesis by repressing genes involved in fatty acid and phospholipid metabolism. The polypeptide is Transcription factor FapR (Thermoanaerobacter pseudethanolicus (strain ATCC 33223 / 39E) (Clostridium thermohydrosulfuricum)).